The primary structure comprises 418 residues: Caveolae-associated protein 2 (418 aa).

Residues 1–42 (MGEDAAQAEKFQHPNTDMLQEKPSSPSPMPSSTPSPSLNLGS) form a disordered region. G2 carries the post-translational modification N-acetylglycine. An interaction with CAVIN1 region spans residues 2 to 168 (GEDAAQAEKF…IFQEESEIPA (167 aa)). Phosphoserine occurs at positions 27, 35, 37, and 51. Coiled-coil stretches lie at residues 61–87 (LLDK…INLE) and 126–268 (RAVR…VERR). Positions 62–100 (LDKLVNMLDAVRENQHNMEQRQINLEGSVKGIQNDLTKL) are leucine-zipper. The residue at position 196 (T196) is a Phosphothreonine. Disordered stretches follow at residues 200–238 (VDLS…SLKK) and 262–382 (IVSV…ALQQ). 3 positions are modified to phosphoserine: S203, S204, and S218. Residues 203-219 (SSDDELPRDEEALEDSA) are compositionally biased toward acidic residues. Residues 220–238 (EEKMEESRAEKIKRSSLKK) show a composition bias toward basic and acidic residues. Residues 275 to 287 (LTPNHQKASSGKS) show a composition bias toward polar residues. A phosphoserine mark is found at S283, S284, S287, S288, S293, and S296. Basic and acidic residues predominate over residues 303 to 321 (REGESSVENETKLEDQMQE). Phosphoserine occurs at positions 327, 336, 359, and 363. Residues 355–366 (RGNNSAVGSNAD) are compositionally biased toward polar residues. T368 carries the post-translational modification Phosphothreonine. Residues 368–377 (TIEEDEEEEP) show a composition bias toward acidic residues. Y388 is modified (phosphotyrosine). Phosphoserine occurs at positions 390 and 396. The disordered stretch occupies residues 396–418 (SEEMEEPSEKQVQPAVLHVDQTA).

This sequence belongs to the CAVIN family. Component of the CAVIN complex composed of CAVIN1, CAVIN2, CAVIN3 and CAVIN4. Binds to PRKCA in the presence of phosphatidylserine. Interacts with CAVIN4; this augments the transactivation of NPPA by CAVIN4. Interacts with CAVIN1. Interacts with CAV3. In terms of processing, the N-terminus is blocked. Heart, adipose tissue, lung and endothelial cells (at protein level). Highly expressed in kidney and expressed at lower levels in liver, spleen, thymus, stomach, intestine and uterus.

It is found in the cytoplasm. The protein localises to the cytosol. The protein resides in the membrane. Its subcellular location is the caveola. Its function is as follows. Plays an important role in caveolar biogenesis and morphology. Regulates caveolae morphology by inducing membrane curvature within caveolae. Plays a role in caveola formation in a tissue-specific manner. Required for the formation of caveolae in the lung and fat endothelia but not in the heart endothelia. Negatively regulates the size or stability of CAVIN complexes in the lung endothelial cells. May play a role in targeting PRKCA to caveolae. The protein is Caveolae-associated protein 2 (Cavin2) of Mus musculus (Mouse).